Reading from the N-terminus, the 1008-residue chain is Ubiquitin carboxyl-terminal hydrolase 16 (1008 aa).

A helical transmembrane segment spans residues leucine 7–valine 27. Residues cysteine 74, cysteine 77, cysteine 85, cysteine 88, cysteine 94, cysteine 98, histidine 107, and cysteine 111 each coordinate Zn(2+). An MYND-type zinc finger spans residues cysteine 74–cysteine 111. 5 disordered regions span residues aspartate 122–proline 149, leucine 159–aspartate 178, valine 187–histidine 233, serine 275–leucine 309, and serine 326–aspartate 379. The span at serine 193–serine 203 shows a compositional bias: low complexity. Residues glutamate 222–histidine 233 show a composition bias toward basic and acidic residues. Residues glycine 284–serine 295 show a composition bias toward polar residues. Over residues serine 340 to serine 351 the composition is skewed to low complexity. The USP domain maps to cysteine 542–cysteine 847. The active-site Nucleophile is the cysteine 551. Histidine 807 functions as the Proton acceptor in the catalytic mechanism. Disordered stretches follow at residues lysine 859–glutamine 905 and phenylalanine 952–arginine 1008. Composition is skewed to low complexity over residues serine 878–serine 888 and serine 965–proline 992.

The protein belongs to the peptidase C19 family. Interacts with SHM1 and SHM4. Interacts with HIPP27. Expressed in flowers, siliques, rosette leaves, cauline leaves, stems and at a lower level in roots. In roots, expressed in the sieve elements.

Its subcellular location is the membrane. It carries out the reaction Thiol-dependent hydrolysis of ester, thioester, amide, peptide and isopeptide bonds formed by the C-terminal Gly of ubiquitin (a 76-residue protein attached to proteins as an intracellular targeting signal).. Recognizes and hydrolyzes the peptide bond at the C-terminal Gly of ubiquitin. Involved in the processing of poly-ubiquitin precursors as well as that of ubiquitinated proteins. Involved in salt tolerance by modulating sodium transport activity and repressing cell death at least partially through modulating SHM1 stability and activity. Involved in cadmium tolerance by interacting with HIPP27 and probably modulating its stability. The polypeptide is Ubiquitin carboxyl-terminal hydrolase 16 (UBP16) (Arabidopsis thaliana (Mouse-ear cress)).